The following is a 310-amino-acid chain: tRNA pseudouridine synthase B (310 aa).

Aspartate 47 serves as the catalytic Nucleophile.

The protein belongs to the pseudouridine synthase TruB family. Type 1 subfamily.

The catalysed reaction is uridine(55) in tRNA = pseudouridine(55) in tRNA. Responsible for synthesis of pseudouridine from uracil-55 in the psi GC loop of transfer RNAs. This chain is tRNA pseudouridine synthase B, found in Psychromonas ingrahamii (strain DSM 17664 / CCUG 51855 / 37).